A 192-amino-acid polypeptide reads, in one-letter code: Adenylate kinase (192 aa).

12–17 (GSGKTT) lines the ATP pocket. Positions 33–62 (STGDLLRAEVAKDSELGKKIDKIISGGNLV) are NMP. Residues Thr-34, Arg-39, 60-62 (NLV), 87-90 (GYPR), and Gln-94 contribute to the AMP site. The segment at 129–135 (GRARGAD) is LID. Arg-130 is a binding site for ATP. AMP is bound by residues Arg-132 and Arg-144. Residue Arg-172 participates in ATP binding.

This sequence belongs to the adenylate kinase family. Monomer.

It is found in the cytoplasm. The enzyme catalyses AMP + ATP = 2 ADP. Its pathway is purine metabolism; AMP biosynthesis via salvage pathway; AMP from ADP: step 1/1. Functionally, catalyzes the reversible transfer of the terminal phosphate group between ATP and AMP. Plays an important role in cellular energy homeostasis and in adenine nucleotide metabolism. This is Adenylate kinase from Campylobacter hominis (strain ATCC BAA-381 / DSM 21671 / CCUG 45161 / LMG 19568 / NCTC 13146 / CH001A).